The sequence spans 70 residues: Conotoxin Cl6.13 (70 aa).

Residues 1–21 (MKFPLLFISLALAAFLTRVQD) form the signal peptide. The propeptide occupies 22-33 (ADSSVISKEKSV). Intrachain disulfides connect Cys41-Cys58, Cys48-Cys63, and Cys57-Cys68.

As to expression, expressed by the venom duct.

The protein localises to the secreted. This chain is Conotoxin Cl6.13, found in Californiconus californicus (California cone).